The primary structure comprises 354 residues: Elongation factor Ts, mitochondrial (354 aa).

A mitochondrion-targeting transit peptide spans 1–47 (MMRSTLSLLQKCRLPNNNGSLLSFKNNQVVNQTALFSMKSNQQYRFY).

This sequence belongs to the EF-Ts family.

The protein localises to the mitochondrion. Its function is as follows. Associates with the EF-Tu.GDP complex and induces the exchange of GDP to GTP. It remains bound to the aminoacyl-tRNA.EF-Tu.GTP complex up to the GTP hydrolysis stage on the ribosome. This Heterostelium pallidum (strain ATCC 26659 / Pp 5 / PN500) (Cellular slime mold) protein is Elongation factor Ts, mitochondrial (tsfm).